Here is an 84-residue protein sequence, read N- to C-terminus: Large ribosomal subunit protein bL31B (84 aa).

This sequence belongs to the bacterial ribosomal protein bL31 family. Type B subfamily. In terms of assembly, part of the 50S ribosomal subunit.

The chain is Large ribosomal subunit protein bL31B from Phocaeicola vulgatus (strain ATCC 8482 / DSM 1447 / JCM 5826 / CCUG 4940 / NBRC 14291 / NCTC 11154) (Bacteroides vulgatus).